Here is a 472-residue protein sequence, read N- to C-terminus: L-fuculokinase (472 aa).

The protein belongs to the FGGY kinase family. A divalent metal cation serves as cofactor.

It catalyses the reaction L-fuculose + ATP = L-fuculose 1-phosphate + ADP + H(+). The protein operates within carbohydrate degradation; L-fucose degradation; L-lactaldehyde and glycerone phosphate from L-fucose: step 2/3. Catalyzes the phosphorylation of L-fuculose. The sequence is that of L-fuculokinase from Escherichia coli O157:H7.